The primary structure comprises 421 residues: Thymidine phosphorylase (421 aa).

This sequence belongs to the thymidine/pyrimidine-nucleoside phosphorylase family. Homodimer.

The catalysed reaction is thymidine + phosphate = 2-deoxy-alpha-D-ribose 1-phosphate + thymine. The enzymes which catalyze the reversible phosphorolysis of pyrimidine nucleosides are involved in the degradation of these compounds and in their utilization as carbon and energy sources, or in the rescue of pyrimidine bases for nucleotide synthesis. In Mycoplasma genitalium (strain ATCC 33530 / DSM 19775 / NCTC 10195 / G37) (Mycoplasmoides genitalium), this protein is Thymidine phosphorylase (deoA).